The primary structure comprises 1990 residues: Protein TANC2 (1990 aa).

Disordered stretches follow at residues 1–85 (MFRN…SVDE) and 129–149 (SPCS…PCST). 4 positions are modified to phosphoserine: Ser169, Ser238, Ser294, and Ser400. Positions 396-442 (IASDSPHASPKHVDANRELPLTQPPSAHSSITSGSCPGTPEMRRRQE) are disordered. The span at 419 to 431 (PPSAHSSITSGSC) shows a compositional bias: polar residues. ANK repeat units follow at residues 846–878 (EGLS…NINY), 884–913 (NNAP…NVDA), 917–946 (SGLT…KVDH), 950–979 (NGQC…TMAG), 990–1019 (AIQQ…KDEE), 1033–1062 (WGET…AVAQ), 1066–1095 (RGAV…DVNM), 1099–1128 (QGRT…SIAL), 1132–1161 (EGLT…ATDH), 1165–1194 (NGRT…MIEH), and 1198–1227 (SGMR…KIGP). 3 TPR repeats span residues 1244 to 1277 (LSKL…FPRE), 1291 to 1324 (VSLL…KPKS), and 1325 to 1358 (YEAY…CPNN). Disordered regions lie at residues 1372–1401 (CRQM…EPQH), 1430–1586 (EARP…KMAQ), and 1692–1718 (LTKE…PQIG). Phosphoserine is present on residues Ser1442 and Ser1458. Residues 1469-1498 (RSSSSVGSPTRQTYQSTSPALSPTHQNSHY) are compositionally biased toward polar residues. A phosphoserine mark is found at Ser1530 and Ser1545. Residues 1553–1572 (VYRSQSGSPVRYQQETSVSQ) are compositionally biased toward polar residues. Asymmetric dimethylarginine is present on residues Arg1563 and Arg1576. The residue at position 1579 (Ser1579) is a Phosphoserine. Ser1722 bears the Phosphoserine mark. Low complexity predominate over residues 1783-1798 (SPSSNSISSTSNLTPT). Disordered stretches follow at residues 1783–1803 (SPSS…RPSS) and 1821–1843 (DELS…SRTT). 2 positions are modified to phosphoserine: Ser1824 and Ser1827. An N-linked (GlcNAc...) asparagine glycan is attached at Asn1928. Residues 1968–1990 (SRDSRQGQTSPIKPKRPFVESNV) form a disordered region.

The protein belongs to the TANC family. As to quaternary structure, interacts with KIF1A; the interaction decreases in presence of calcium.

It localises to the cell projection. The protein localises to the dendritic spine. Functionally, scaffolding protein in the dendritic spines which acts as immobile postsynaptic posts able to recruit KIF1A-driven dense core vesicles to dendritic spines. This chain is Protein TANC2 (TANC2), found in Homo sapiens (Human).